A 211-amino-acid polypeptide reads, in one-letter code: Cytidylate kinase (211 aa).

7–15 (GPAASGKGT) serves as a coordination point for ATP.

Belongs to the cytidylate kinase family. Type 1 subfamily.

The protein localises to the cytoplasm. The catalysed reaction is CMP + ATP = CDP + ADP. It catalyses the reaction dCMP + ATP = dCDP + ADP. In Rhodopseudomonas palustris (strain BisA53), this protein is Cytidylate kinase.